The sequence spans 1145 residues: DNA-directed RNA polymerase subunit beta (1145 aa).

Over residues 1101 to 1112 (LPEERRVSSSKE) the composition is skewed to basic and acidic residues. The tract at residues 1101–1145 (LPEERRVSSSKEEIEEEEEVEDNSDEFDETFLEEAEDDFSLDDED) is disordered. Acidic residues predominate over residues 1113–1145 (EIEEEEEVEDNSDEFDETFLEEAEDDFSLDDED).

It belongs to the RNA polymerase beta chain family. As to quaternary structure, the RNAP catalytic core consists of 2 alpha, 1 beta, 1 beta' and 1 omega subunit. When a sigma factor is associated with the core the holoenzyme is formed, which can initiate transcription.

The catalysed reaction is RNA(n) + a ribonucleoside 5'-triphosphate = RNA(n+1) + diphosphate. Functionally, DNA-dependent RNA polymerase catalyzes the transcription of DNA into RNA using the four ribonucleoside triphosphates as substrates. This chain is DNA-directed RNA polymerase subunit beta, found in Desulforamulus reducens (strain ATCC BAA-1160 / DSM 100696 / MI-1) (Desulfotomaculum reducens).